A 316-amino-acid polypeptide reads, in one-letter code: Arginine transport system permease protein ArgU (316 aa).

The segment covering 1-14 (MSDLNQGPGASTAQ) has biased composition (polar residues). Residues 1 to 20 (MSDLNQGPGASTAQPKPIEA) are disordered. A run of 6 helical transmembrane segments spans residues 29–49 (WVAAAIIVALLAWFIISALNN), 74–94 (IALTLLSMILGVVLGAILAVM), 108–128 (LYLWIFRGTPIYVQLVFWGLL), 151–171 (MFLLAVIGLGLNEAAYMAEIV), 217–237 (LISMLKTTSLVVAIPYSLELY), and 251–271 (VPMLLVAASWYLVITSILMVG). The ABC transmembrane type-1 domain occupies 70 to 274 (ALHTIALTLL…TSILMVGQYY (205 aa)).

The protein belongs to the binding-protein-dependent transport system permease family. The complex is probably composed of two ATP-binding proteins (ArgV), two transmembrane proteins (ArgU) and a solute-binding protein (ArgT).

Its subcellular location is the cell membrane. Functionally, part of the ABC transporter complex ArgTUV involved in L-arginine import. May also transport L-citrulline. Probably responsible for the translocation of the substrate across the membrane. The chain is Arginine transport system permease protein ArgU from Corynebacterium glutamicum (strain ATCC 13032 / DSM 20300 / JCM 1318 / BCRC 11384 / CCUG 27702 / LMG 3730 / NBRC 12168 / NCIMB 10025 / NRRL B-2784 / 534).